The sequence spans 508 residues: Protein adenylyltransferase fic-1 (508 aa).

Residues T44–V64 traverse the membrane as a helical segment. TPR repeat units follow at residues A147–N180 and P181–N214. The short motif at T270–G275 is the Inhibitory (S/T)XXXE(G/N) motif element. E274 is a binding site for ATP. A Fido domain is found at I326–K461. O-AMP-threonine; by autocatalysis is present on T352. Position 357 to 360 (V357 to F360) interacts with ATP. Residue H404 is part of the active site. ATP contacts are provided by residues D408–R415, Y440–Y441, and N448. T476 is modified (O-AMP-threonine; by autocatalysis). The disordered stretch occupies residues L482 to N508. The span at V496–N508 shows a compositional bias: basic and acidic residues.

The protein belongs to the fic family. As to quaternary structure, forms homodimers; homodimerization might be required for adenylyltransferase activity. Ubiquitously expressed, with high expression in the germline.

It is found in the endoplasmic reticulum membrane. The protein resides in the nucleus membrane. The enzyme catalyses L-tyrosyl-[protein] + ATP = O-(5'-adenylyl)-L-tyrosyl-[protein] + diphosphate. The catalysed reaction is L-threonyl-[protein] + ATP = 3-O-(5'-adenylyl)-L-threonyl-[protein] + diphosphate. It carries out the reaction 3-O-(5'-adenylyl)-L-threonyl-[protein] + H2O = L-threonyl-[protein] + AMP + H(+). The side chain of Glu-274 determines which of the two opposing activities (AMPylase or de-AMPylase) will take place. In response to endoplasmic reticulum stress, mediates de-AMPylase activity. Adenylyltransferase activity is inhibited by the inhibitory helix present at the N-terminus: Glu-274 binds ATP and competes with ATP-binding at Arg-415, thereby preventing adenylyltransferase activity. In unstressed cells, disengagement of Glu-274 promotes adenylyltransferase activity. Activation dissociates ATP-binding from Glu-274, allowing ordered binding of the entire ATP moiety with the alpha-phosphate in an orientation that is productive for accepting an incoming target hydroxyl side chain. Functionally, protein that can both mediate the addition of adenosine 5'-monophosphate (AMP) to specific residues of target proteins (AMPylation), and the removal of the same modification from target proteins (de-AMPylation), depending on the context. The side chain of Glu-274 determines which of the two opposing activities (AMPylase or de-AMPylase) will take place. Adenylyltransferase that mediates the addition of adenosine 5'-monophosphate (AMP) to specific residues of target proteins. In vivo target proteins include the heat-shock 70 family proteins hsp-1 and hsp-3 and the translation elongation factors eef-1A, eef-1G and eef-2. Can AMPylate core histone H3 in vitro. Can also act as a phosphodiesterase by mediating removal of ATP (de-AMPylation) from target proteins. Decreases susceptibility to P.aeruginosa-mediated killing and might therefore play a role in the innate immune response. This chain is Protein adenylyltransferase fic-1, found in Caenorhabditis elegans.